Reading from the N-terminus, the 461-residue chain is Probable ornithine decarboxylase (461 aa).

The tract at residues 1–35 (MTGTKRNGEEVVNENNNNNVAEETNKKAKVDESST) is disordered. The segment covering 13-22 (NENNNNNVAE) has biased composition (low complexity). Positions 23–32 (ETNKKAKVDE) are enriched in basic and acidic residues. Lysine 116 carries the N6-(pyridoxal phosphate)lysine modification. Residues serine 247, glycine 284, and 317–320 (EPGR) contribute to the pyridoxal 5'-phosphate site. 375 to 376 (FD) contributes to the substrate binding site. Cysteine 402 serves as the catalytic Proton donor; shared with dimeric partner. Residue aspartate 403 participates in substrate binding. Pyridoxal 5'-phosphate is bound at residue tyrosine 431.

It belongs to the Orn/Lys/Arg decarboxylase class-II family. In terms of assembly, homodimer. Only the dimer is catalytically active, as the active sites are constructed of residues from both monomers. The cofactor is pyridoxal 5'-phosphate.

It carries out the reaction L-ornithine + H(+) = putrescine + CO2. It participates in amine and polyamine biosynthesis; putrescine biosynthesis via L-ornithine pathway; putrescine from L-ornithine: step 1/1. With respect to regulation, inhibited by antizyme (AZ) in response to polyamine levels. AZ inhibits the assembly of the functional homodimer by binding to ODC monomers and targeting them for ubiquitin-independent proteolytic destruction by the 26S proteasome. Functionally, catalyzes the first and rate-limiting step of polyamine biosynthesis that converts ornithine into putrescine, which is the precursor for the polyamines, spermidine and spermine. Polyamines are essential for cell proliferation and are implicated in cellular processes, ranging from DNA replication to apoptosis. This Dictyostelium discoideum (Social amoeba) protein is Probable ornithine decarboxylase (odc).